The following is a 160-amino-acid chain: Transcriptional repressor NrdR (160 aa).

A zinc finger spans residues 3–34; that stretch reads CPACNYNGTKVLDSRPVQDFGSIRRRRECESC. The ATP-cone domain occupies 49–139; sequence LIIVKKDGTR…VYKQFKDINV (91 aa).

It belongs to the NrdR family. Zn(2+) serves as cofactor.

Functionally, negatively regulates transcription of bacterial ribonucleotide reductase nrd genes and operons by binding to NrdR-boxes. The polypeptide is Transcriptional repressor NrdR (Exiguobacterium sibiricum (strain DSM 17290 / CCUG 55495 / CIP 109462 / JCM 13490 / 255-15)).